The sequence spans 646 residues: Threonine--tRNA ligase (646 aa).

The TGS domain occupies 1–61 (MIKITFPDGN…NEDSNFEIVT (61 aa)). The interval 242–540 (DHRKLGRELD…LIEVYKGAFP (299 aa)) is catalytic. The Zn(2+) site is built by Cys336, His387, and His517.

Belongs to the class-II aminoacyl-tRNA synthetase family. As to quaternary structure, homodimer. Zn(2+) is required as a cofactor.

The protein resides in the cytoplasm. The enzyme catalyses tRNA(Thr) + L-threonine + ATP = L-threonyl-tRNA(Thr) + AMP + diphosphate + H(+). Functionally, catalyzes the attachment of threonine to tRNA(Thr) in a two-step reaction: L-threonine is first activated by ATP to form Thr-AMP and then transferred to the acceptor end of tRNA(Thr). Also edits incorrectly charged L-seryl-tRNA(Thr). The sequence is that of Threonine--tRNA ligase from Lactococcus lactis subsp. lactis (strain IL1403) (Streptococcus lactis).